Here is a 107-residue protein sequence, read N- to C-terminus: Nucleoid-associated protein R00231 (107 aa).

This sequence belongs to the YbaB/EbfC family. Homodimer.

Its subcellular location is the cytoplasm. The protein localises to the nucleoid. Binds to DNA and alters its conformation. May be involved in regulation of gene expression, nucleoid organization and DNA protection. The chain is Nucleoid-associated protein R00231 from Rhizobium meliloti (strain 1021) (Ensifer meliloti).